The following is a 340-amino-acid chain: Probable tRNA pseudouridine synthase B (340 aa).

Catalysis depends on aspartate 82, which acts as the Nucleophile. The region spanning 250–325 is the PUA domain; sequence LPKVWIKDSA…IAVDVEKVFM (76 aa).

This sequence belongs to the pseudouridine synthase TruB family. Type 2 subfamily.

It carries out the reaction uridine(55) in tRNA = pseudouridine(55) in tRNA. In terms of biological role, could be responsible for synthesis of pseudouridine from uracil-55 in the psi GC loop of transfer RNAs. The sequence is that of Probable tRNA pseudouridine synthase B from Pyrococcus furiosus (strain ATCC 43587 / DSM 3638 / JCM 8422 / Vc1).